The primary structure comprises 84 residues: Molybdopterin synthase sulfur carrier subunit (84 aa).

Glycine 84 carries the 1-thioglycine; alternate modification. Glycine 84 carries the glycyl adenylate; alternate modification.

This sequence belongs to the MoaD family. MOCS2A subfamily. Heterotetramer; composed of 2 small (MOCS2A) and 2 large (MOCS2B) subunits. Post-translationally, C-terminal thiocarboxylation occurs in 2 steps, it is first acyl-adenylated (-COAMP) via the hesA/moeB/thiF part of MOCS3, then thiocarboxylated (-COSH) via the rhodanese domain of MOCS3.

It localises to the cytoplasm. Its pathway is cofactor biosynthesis; molybdopterin biosynthesis. Functionally, acts as a sulfur carrier required for molybdopterin biosynthesis. Component of the molybdopterin synthase complex that catalyzes the conversion of precursor Z into molybdopterin by mediating the incorporation of 2 sulfur atoms into precursor Z to generate a dithiolene group. In the complex, serves as sulfur donor by being thiocarboxylated (-COSH) at its C-terminus by MOCS3. After interaction with MOCS2B, the sulfur is then transferred to precursor Z to form molybdopterin. The protein is Molybdopterin synthase sulfur carrier subunit of Caenorhabditis briggsae.